Here is a 292-residue protein sequence, read N- to C-terminus: Protein CHLOROPLAST ENHANCING STRESS TOLERANCE, chloroplastic (292 aa).

The span at M1–P15 shows a compositional bias: pro residues. The N-terminal 67 residues, M1–A67, are a transit peptide targeting the chloroplast. Disordered stretches follow at residues M1–D119 and M206–D225. Composition is skewed to low complexity over residues S49–R58 and A94–A107. A helical transmembrane segment spans residues A267–F287.

Belongs to the Y3IP1/CEST family.

Its subcellular location is the plastid. It localises to the chloroplast thylakoid membrane. Functionally, involved in light-induced chloroplast development and growth. Involved in the plant response to abiotic and photooxidative stresses. May be involved in the suppression of photooxidative damage. This chain is Protein CHLOROPLAST ENHANCING STRESS TOLERANCE, chloroplastic, found in Oryza sativa subsp. indica (Rice).